The sequence spans 158 residues: Large ribosomal subunit protein uL18 (158 aa).

Belongs to the universal ribosomal protein uL18 family. In terms of assembly, part of the 50S ribosomal subunit. Contacts the 5S and 23S rRNAs.

This is one of the proteins that bind and probably mediate the attachment of the 5S RNA into the large ribosomal subunit, where it forms part of the central protuberance. The polypeptide is Large ribosomal subunit protein uL18 (Picrophilus torridus (strain ATCC 700027 / DSM 9790 / JCM 10055 / NBRC 100828 / KAW 2/3)).